A 170-amino-acid chain; its full sequence is RNA pyrophosphohydrolase (170 aa).

Residues 8–158 (PYRTCVGMML…KRPVYERVVK (151 aa)) form the Nudix hydrolase domain. The short motif at 46–67 (GGVDPGEDTWLAAKRELYEETS) is the Nudix box element.

This sequence belongs to the Nudix hydrolase family. RppH subfamily. The cofactor is a divalent metal cation.

Accelerates the degradation of transcripts by removing pyrophosphate from the 5'-end of triphosphorylated RNA, leading to a more labile monophosphorylated state that can stimulate subsequent ribonuclease cleavage. This chain is RNA pyrophosphohydrolase, found in Nitrobacter winogradskyi (strain ATCC 25391 / DSM 10237 / CIP 104748 / NCIMB 11846 / Nb-255).